We begin with the raw amino-acid sequence, 362 residues long: ATP synthase F(1) complex catalytic subunit beta, mitochondrial (362 aa).

K14 is modified (N6-acetyllysine; alternate). K14 is modified (N6-succinyllysine; alternate). Position 51 is an N6-acetyllysine (K51). ADP contacts are provided by V62, V63, G64, K65, T66, and V67. V62 contacts ATP. Phosphate contacts are provided by V62, V63, G64, K65, and T66. 4 residues coordinate ATP: G64, K65, T66, and V67. T66 contacts Mg(2+). E91 contacts Mg(2+). N6-acetyllysine; alternate occurs at positions 112 and 117. N6-succinyllysine; alternate occurs at positions 112 and 117. Position 165 is a phosphothreonine (T165). The residue at position 279 (K279) is an N6-acetyllysine. At S286 the chain carries Phosphoserine. N6-acetyllysine is present on residues K333 and K338.

Belongs to the ATPase alpha/beta chains family. As to quaternary structure, homotrimer. Component of the ATP synthase complex composed at least of ATP5F1A/subunit alpha, ATP5F1B/subunit beta, ATP5MC1/subunit c (homooctomer), MT-ATP6/subunit a, MT-ATP8/subunit 8, ATP5ME/subunit e, ATP5MF/subunit f, ATP5MG/subunit g, ATP5MK/subunit k, ATP5MJ/subunit j, ATP5F1C/subunit gamma, ATP5F1D/subunit delta, ATP5F1E/subunit epsilon, ATP5PF/subunit F6, ATP5PB/subunit b, ATP5PD/subunit d, ATP5PO/subunit OSCP. ATP synthase complex consists of a soluble F(1) head domain (subunits alpha(3) and beta(3)) - the catalytic core - and a membrane F(0) domain - the membrane proton channel (subunits c, a, 8, e, f, g, k and j). These two domains are linked by a central stalk (subunits gamma, delta, and epsilon) rotating inside the F1 region and a stationary peripheral stalk (subunits F6, b, d, and OSCP). Interacts with PPIF. Interacts with BCL2L1 isoform BCL-X(L); the interaction mediates the association of BCL2L1 isoform BCL-X(L) with the mitochondrial membrane F(1)F(0) ATP synthase and enhances neurons metabolic efficiency. Interacts with CLN5 and PPT1. Interacts with S100A1; this interaction increases F1-ATPase activity. Interacts with MTLN. Interacts with TTC5/STRAP; the interaction results in decreased mitochondrial ATP production.

The protein localises to the mitochondrion inner membrane. It catalyses the reaction ATP + H2O + 4 H(+)(in) = ADP + phosphate + 5 H(+)(out). Catalytic subunit beta, of the mitochondrial membrane ATP synthase complex (F(1)F(0) ATP synthase or Complex V) that produces ATP from ADP in the presence of a proton gradient across the membrane which is generated by electron transport complexes of the respiratory chain. ATP synthase complex consist of a soluble F(1) head domain - the catalytic core - and a membrane F(1) domain - the membrane proton channel. These two domains are linked by a central stalk rotating inside the F(1) region and a stationary peripheral stalk. During catalysis, ATP synthesis in the catalytic domain of F(1) is coupled via a rotary mechanism of the central stalk subunits to proton translocation. In vivo, can only synthesize ATP although its ATP hydrolase activity can be activated artificially in vitro. With the subunit alpha (ATP5F1A), forms the catalytic core in the F(1) domain. The polypeptide is ATP synthase F(1) complex catalytic subunit beta, mitochondrial (Mesocricetus auratus (Golden hamster)).